A 400-amino-acid chain; its full sequence is MIIKPRVRGFICVTTHPVGCEANVKEQIDYVTSHGPIANGPKKVLVIGASTGYGLAARISAAFGSDADTLGVFFERAGSETKPGTAGWYNSAAFEKFATEKGRYARSINGDAFSDHVKQVTIDTIKQDLGKVDLVVYSLAAPRRTHPKTGETISSTLKPIGKTVTFRGLDTDKEVLRDVTLEPATQEEIDGTVAVMGGEDWQMWIDALDEAGVLADGAKTTAFTYLGEQITHDIYWNGSIGEAKKDLDKKVLSIRDQLAAHGGDARVSVLKAVVTQASSAIPMMPLYLSLLFKTMKETGTHEGCIEQVYGLFKDSLYGATPHVDEEGRLRADYKELDPQVQAKVVAQWDHVTNDNLYELTDFTGYKTEFLRLFGFEIAGVDYDADVNPDVKIPGIIDTTV.

Residues 48–53 (GASTGY), 74–75 (FE), 111–112 (DA), and 139–140 (LA) each bind NAD(+). Residue Y225 coordinates substrate. Y235 (proton donor) is an active-site residue. NAD(+)-binding positions include K244 and 273 to 275 (VVT).

Belongs to the TER reductase family. In terms of assembly, monomer.

It catalyses the reaction a 2,3-saturated acyl-[ACP] + NAD(+) = a (2E)-enoyl-[ACP] + NADH + H(+). It participates in lipid metabolism; fatty acid biosynthesis. In terms of biological role, involved in the final reduction of the elongation cycle of fatty acid synthesis (FAS II). Catalyzes the reduction of a carbon-carbon double bond in an enoyl moiety that is covalently linked to an acyl carrier protein (ACP). This chain is Enoyl-[acyl-carrier-protein] reductase [NADH], found in Burkholderia lata (strain ATCC 17760 / DSM 23089 / LMG 22485 / NCIMB 9086 / R18194 / 383).